The following is a 40-amino-acid chain: Probable non-specific lipid-transfer protein (40 aa).

It belongs to the plant LTP family. In terms of processing, phosphorylated by Ca(2+)-dependent protein kinase.

Functionally, plant non-specific lipid-transfer proteins transfer phospholipids as well as galactolipids across membranes. May play a role in wax or cutin deposition in the cell walls of expanding epidermal cells and certain secretory tissues. The sequence is that of Probable non-specific lipid-transfer protein from Triticum aestivum (Wheat).